A 1052-amino-acid polypeptide reads, in one-letter code: Malignant fibrous histiocytoma-amplified sequence 1 (1052 aa).

Ala-2 bears the N-acetylalanine mark. LRR repeat units follow at residues 64–85, 88–109, 112–133, 136–157, 159–180, 182–203, 205–226, 228–249, 251–272, 274–296, 297–318, 320–341, and 343–364; these read DIEA…LGSA, SLRV…VAEL, HLTE…VVSA, ELRK…LGAL, HLEE…LSCL, RLRT…LLQL, ALEE…ISAL, ALKI…FCEL, SLES…FSCL, RLKM…LPLA, GLEE…ISGL, RLLT…IVEL, and GLEE…FGQL. The required for interaction with PJA2 stretch occupies residues 64-364; that stretch reads DIEALNLGNN…AVLPDHFGQL (301 aa). The required for interaction with PPP2R2A stretch occupies residues 64–649; sequence DIEALNLGNN…DKLLSVAEHR (586 aa). In terms of domain architecture, Roc spans 403-649; the sequence is QPAVQPRLKL…DKLLSVAEHR (247 aa). N6-acetyllysine is present on Lys-601.

In terms of assembly, interacts with RAF1. Interacts with HSPD1. Interacts with PPP2CA; retains PPP2CA into the cytoplasm and excludes it from the nucleus. Interacts with PPP2R2A; the interaction is direct. Interacts with PJA2. In terms of processing, ubiquitinated. Ubiquitination by PJA2 does not lead MFHAS1 to proteasomal degradation but positively regulates its function in polarization of macrophages. Ubiquitously expressed. Overexpressed in malignant fibrous histiocytomas. Expressed in red blood cells (at protein level).

The protein localises to the cytoplasm. In terms of biological role, probable GTP-binding protein. Functions in innate immunity and more specifically the inflammatory response as a regulator of the Toll-like receptor TLR2 and TLR4 signaling pathways. Negatively regulates the part of the TLR4 signaling pathway that leads to the activation of the transcription factor AP-1. By retaining the phosphatase complex PP2A into the cytoplasm, prevents the dephosphorylation of the AP-1 subunit JUN which is required for proper activation of the transcription factor. Both inhibits and activates the TLR2-dependent signaling pathway. Positively regulates the TLR2 signaling pathway to activate specifically the downstream p38 and JNK MAP kinases and promote the polarization of macrophages toward the pro-inflammatory M1 phenotype. It may also play a role in the regulation of inflammation induced by high glucose through the PKB/AKT signaling pathway. Also involved in erythrocyte differentiation through activation of the ERK1/ERK2 signaling pathway. The protein is Malignant fibrous histiocytoma-amplified sequence 1 of Homo sapiens (Human).